Here is an 88-residue protein sequence, read N- to C-terminus: Small ribosomal subunit protein uS15 (88 aa).

This sequence belongs to the universal ribosomal protein uS15 family. Part of the 30S ribosomal subunit. Forms a bridge to the 50S subunit in the 70S ribosome, contacting the 23S rRNA.

Its function is as follows. One of the primary rRNA binding proteins, it binds directly to 16S rRNA where it helps nucleate assembly of the platform of the 30S subunit by binding and bridging several RNA helices of the 16S rRNA. In terms of biological role, forms an intersubunit bridge (bridge B4) with the 23S rRNA of the 50S subunit in the ribosome. The chain is Small ribosomal subunit protein uS15 from Hydrogenovibrio crunogenus (strain DSM 25203 / XCL-2) (Thiomicrospira crunogena).